Here is an 89-residue protein sequence, read N- to C-terminus: Teretoxin Tan6.8 (89 aa).

The first 21 residues, 1 to 21, serve as a signal peptide directing secretion; sequence MRLLLILLLLTPVILAGSLDE. The segment at 22–42 is disordered; it reads EPNNADGANAASFTADQEGRH. A propeptide spanning residues 22–44 is cleaved from the precursor; that stretch reads EPNNADGANAASFTADQEGRHKR.

Post-translationally, contains 3 disulfide bonds. As to expression, expressed by the venom duct.

The protein localises to the secreted. The protein is Teretoxin Tan6.8 of Terebra anilis (Auger snail).